The sequence spans 78 residues: Small ribosomal subunit protein bS18 (78 aa).

The protein belongs to the bacterial ribosomal protein bS18 family. As to quaternary structure, part of the 30S ribosomal subunit. Forms a tight heterodimer with protein bS6.

Binds as a heterodimer with protein bS6 to the central domain of the 16S rRNA, where it helps stabilize the platform of the 30S subunit. The protein is Small ribosomal subunit protein bS18 of Lacticaseibacillus casei (strain BL23) (Lactobacillus casei).